A 426-amino-acid chain; its full sequence is Glutamate-1-semialdehyde 2,1-aminomutase (426 aa).

Position 265 is an N6-(pyridoxal phosphate)lysine (Lys265).

The protein belongs to the class-III pyridoxal-phosphate-dependent aminotransferase family. HemL subfamily. In terms of assembly, homodimer. Requires pyridoxal 5'-phosphate as cofactor.

It localises to the cytoplasm. The enzyme catalyses (S)-4-amino-5-oxopentanoate = 5-aminolevulinate. It participates in porphyrin-containing compound metabolism; protoporphyrin-IX biosynthesis; 5-aminolevulinate from L-glutamyl-tRNA(Glu): step 2/2. The polypeptide is Glutamate-1-semialdehyde 2,1-aminomutase (Escherichia coli O157:H7).